Here is a 206-residue protein sequence, read N- to C-terminus: Small ribosomal subunit protein uS7 (206 aa).

It belongs to the universal ribosomal protein uS7 family. In terms of assembly, component of the small ribosomal subunit.

It is found in the cytoplasm. In terms of biological role, component of the small ribosomal subunit. The ribosome is a large ribonucleoprotein complex responsible for the synthesis of proteins in the cell. This is Small ribosomal subunit protein uS7 from Entamoeba histolytica (strain ATCC 30459 / HM-1:IMSS / ABRM).